Consider the following 122-residue polypeptide: Large ribosomal subunit protein uL14c (122 aa).

The protein belongs to the universal ribosomal protein uL14 family. As to quaternary structure, part of the 50S ribosomal subunit.

It is found in the plastid. It localises to the chloroplast. In terms of biological role, binds to 23S rRNA. The protein is Large ribosomal subunit protein uL14c of Nicotiana tomentosiformis (Tobacco).